Here is a 244-residue protein sequence, read N- to C-terminus: MPPSAQTQPKYKRVLLKLSGEALMGEENFGIDPKVLNRMALEIGQLIGIGVQVGLVIGGGNLFRGKALQDAGMDRVTGDHMGMLATVMNALAMRDALERSNIATRVMSAIPMSGVVEHYDRRRAIRDLKEGDVVIFCAGTGNPFFTTDSAACLRGIEIDADVVLKATKVDGVYSDDPMKVADAVKYDRLTYDEVLERKLGVMDLTAICLCRDHGMPVRVFDMNKASALINIVVGMEEGTLIERG.

ATP is bound at residue 17 to 20; the sequence is KLSG. Gly-59 contributes to the UMP binding site. 2 residues coordinate ATP: Gly-60 and Arg-64. UMP contacts are provided by residues Asp-79 and 140–147; that span reads TGNPFFTT. Positions 167, 173, and 176 each coordinate ATP.

It belongs to the UMP kinase family. In terms of assembly, homohexamer.

It localises to the cytoplasm. The enzyme catalyses UMP + ATP = UDP + ADP. The protein operates within pyrimidine metabolism; CTP biosynthesis via de novo pathway; UDP from UMP (UMPK route): step 1/1. Its activity is regulated as follows. Inhibited by UTP. Functionally, catalyzes the reversible phosphorylation of UMP to UDP. The chain is Uridylate kinase from Hahella chejuensis (strain KCTC 2396).